Consider the following 380-residue polypeptide: Cytochrome b (380 aa).

4 helical membrane-spanning segments follow: residues 34–54 (FGSL…LLAM), 78–99 (WLIR…YMHI), 114–134 (WNTG…GYVL), and 179–199 (FFAL…IHLT). Heme b-binding residues include histidine 84 and histidine 98. Residues histidine 183 and histidine 197 each contribute to the heme b site. Histidine 202 contributes to the a ubiquinone binding site. 4 consecutive transmembrane segments (helical) span residues 227–247 (LKDI…ALFS), 289–309 (LGGV…PLLH), 321–341 (LSQL…WIGS), and 348–368 (FIII…ILFP).

It belongs to the cytochrome b family. As to quaternary structure, the cytochrome bc1 complex contains 11 subunits: 3 respiratory subunits (MT-CYB, CYC1 and UQCRFS1), 2 core proteins (UQCRC1 and UQCRC2) and 6 low-molecular weight proteins (UQCRH/QCR6, UQCRB/QCR7, UQCRQ/QCR8, UQCR10/QCR9, UQCR11/QCR10 and a cleavage product of UQCRFS1). This cytochrome bc1 complex then forms a dimer. It depends on heme b as a cofactor.

It is found in the mitochondrion inner membrane. Its function is as follows. Component of the ubiquinol-cytochrome c reductase complex (complex III or cytochrome b-c1 complex) that is part of the mitochondrial respiratory chain. The b-c1 complex mediates electron transfer from ubiquinol to cytochrome c. Contributes to the generation of a proton gradient across the mitochondrial membrane that is then used for ATP synthesis. The sequence is that of Cytochrome b (MT-CYB) from Oceanodroma furcata (Fork-tailed storm-petrel).